The chain runs to 359 residues: Chorismate synthase (359 aa).

NADP(+)-binding residues include R48 and R54. Residues 129–131, 241–242, G285, 300–304, and R326 contribute to the FMN site; these read RSS, NA, and KPTSS.

Belongs to the chorismate synthase family. As to quaternary structure, homotetramer. Requires FMNH2 as cofactor.

The catalysed reaction is 5-O-(1-carboxyvinyl)-3-phosphoshikimate = chorismate + phosphate. Its pathway is metabolic intermediate biosynthesis; chorismate biosynthesis; chorismate from D-erythrose 4-phosphate and phosphoenolpyruvate: step 7/7. Catalyzes the anti-1,4-elimination of the C-3 phosphate and the C-6 proR hydrogen from 5-enolpyruvylshikimate-3-phosphate (EPSP) to yield chorismate, which is the branch point compound that serves as the starting substrate for the three terminal pathways of aromatic amino acid biosynthesis. This reaction introduces a second double bond into the aromatic ring system. The protein is Chorismate synthase of Afipia carboxidovorans (strain ATCC 49405 / DSM 1227 / KCTC 32145 / OM5) (Oligotropha carboxidovorans).